Consider the following 771-residue polypeptide: Probable dipeptidyl peptidase 4 (771 aa).

An N-terminal signal peptide occupies residues 1–16; it reads MKYSKLLLLLVSVVQA. N-linked (GlcNAc...) asparagine glycosylation is found at N37, N80, N114, N173, N222, N470, and N495. Active-site charge relay system residues include S618, D695, and H730.

This sequence belongs to the peptidase S9B family.

It localises to the secreted. The catalysed reaction is Release of an N-terminal dipeptide, Xaa-Yaa-|-Zaa-, from a polypeptide, preferentially when Yaa is Pro, provided Zaa is neither Pro nor hydroxyproline.. In terms of biological role, extracellular dipeptidyl-peptidase which removes N-terminal dipeptides sequentially from polypeptides having unsubstituted N-termini provided that the penultimate residue is proline. The chain is Probable dipeptidyl peptidase 4 (dpp4) from Aspergillus flavus (strain ATCC 200026 / FGSC A1120 / IAM 13836 / NRRL 3357 / JCM 12722 / SRRC 167).